We begin with the raw amino-acid sequence, 179 residues long: Stress response regulator gls24 homolog (179 aa).

A disordered region spans residues 147-179 (TSEFTSHQVENVKASVDNGVEKLQDQKAEPRVK). Over residues 165 to 179 (GVEKLQDQKAEPRVK) the composition is skewed to basic and acidic residues.

The protein belongs to the asp23 family.

This chain is Stress response regulator gls24 homolog, found in Streptococcus pyogenes serotype M28 (strain MGAS6180).